A 504-amino-acid chain; its full sequence is Glycerol kinase (504 aa).

Thr-13 is an ADP binding site. Thr-13, Thr-14, and Ser-15 together coordinate ATP. Residue Thr-13 participates in sn-glycerol 3-phosphate binding. Arg-17 is a binding site for ADP. Residues Arg-83, Glu-84, and Tyr-135 each coordinate sn-glycerol 3-phosphate. 3 residues coordinate glycerol: Arg-83, Glu-84, and Tyr-135. His-231 carries the phosphohistidine; by HPr modification. Residue Asp-245 participates in sn-glycerol 3-phosphate binding. Positions 245 and 246 each coordinate glycerol. ADP is bound by residues Thr-267 and Gly-310. ATP-binding residues include Thr-267, Gly-310, Gln-314, and Gly-411. Residues Gly-411 and Asn-415 each coordinate ADP.

Belongs to the FGGY kinase family. In terms of assembly, homotetramer and homodimer (in equilibrium). In terms of processing, the phosphoenolpyruvate-dependent sugar phosphotransferase system (PTS), including enzyme I, and histidine-containing protein (HPr) are required for the phosphorylation, which leads to the activation of the enzyme.

It catalyses the reaction glycerol + ATP = sn-glycerol 3-phosphate + ADP + H(+). The protein operates within polyol metabolism; glycerol degradation via glycerol kinase pathway; sn-glycerol 3-phosphate from glycerol: step 1/1. With respect to regulation, activated by phosphorylation and inhibited by fructose 1,6-bisphosphate (FBP). Functionally, key enzyme in the regulation of glycerol uptake and metabolism. Catalyzes the phosphorylation of glycerol to yield sn-glycerol 3-phosphate. This Pediococcus pentosaceus (strain ATCC 25745 / CCUG 21536 / LMG 10740 / 183-1w) protein is Glycerol kinase.